The sequence spans 215 residues: Cytochrome b6 (215 aa).

Residues 32–52 (IFYCIGGITFTCFLVQVATGF) form a helical membrane-spanning segment. Heme c is bound at residue C35. Heme b contacts are provided by H86 and H100. The next 3 helical transmembrane spans lie at 90-110 (ASMM…TGGF), 116-136 (LTWV…VTGY), and 186-206 (LHTF…FLMI). Heme b-binding residues include H187 and H202.

It belongs to the cytochrome b family. PetB subfamily. As to quaternary structure, the 4 large subunits of the cytochrome b6-f complex are cytochrome b6, subunit IV (17 kDa polypeptide, PetD), cytochrome f and the Rieske protein, while the 4 small subunits are PetG, PetL, PetM and PetN. The complex functions as a dimer. Requires heme b as cofactor. It depends on heme c as a cofactor.

It localises to the plastid. Its subcellular location is the chloroplast thylakoid membrane. Component of the cytochrome b6-f complex, which mediates electron transfer between photosystem II (PSII) and photosystem I (PSI), cyclic electron flow around PSI, and state transitions. The polypeptide is Cytochrome b6 (Chlorella vulgaris (Green alga)).